A 94-amino-acid polypeptide reads, in one-letter code: DNA-directed RNA polymerase subunit Rpo11 (94 aa).

It belongs to the archaeal Rpo11/eukaryotic RPB11/RPC19 RNA polymerase subunit family. As to quaternary structure, part of the RNA polymerase complex.

Its subcellular location is the cytoplasm. The enzyme catalyses RNA(n) + a ribonucleoside 5'-triphosphate = RNA(n+1) + diphosphate. Functionally, DNA-dependent RNA polymerase (RNAP) catalyzes the transcription of DNA into RNA using the four ribonucleoside triphosphates as substrates. This Thermococcus kodakarensis (strain ATCC BAA-918 / JCM 12380 / KOD1) (Pyrococcus kodakaraensis (strain KOD1)) protein is DNA-directed RNA polymerase subunit Rpo11.